The following is an 857-amino-acid chain: Facilitated trehalose transporter Tret1-1 (857 aa).

Disordered regions lie at residues 1–27 and 92–203; these read MSGR…GKLK and SFRP…KATS. Over 1-392 the chain is Cytoplasmic; it reads MSGRDNRGAG…VYRPTTNPIY (392 aa). Basic and acidic residues predominate over residues 134–143; the sequence is EIREHRDRQQ. Polar residues predominate over residues 171–181; the sequence is GNSNTNSNKAA. Phosphoserine is present on residues Ser-248, Ser-249, Ser-250, Ser-320, and Ser-322. The disordered stretch occupies residues 327–346; it reads LTSRQHFQQQRSISTDSRKS. Residues 330–341 show a composition bias toward polar residues; that stretch reads RQHFQQQRSIST. Residues 393–413 form a helical membrane-spanning segment; the sequence is IWTQVLAALSVSLGSLVVGFV. Over 414–440 the chain is Extracellular; it reads SAYTSPALVSMTDRNITSFEVTQDAGS. An N-linked (GlcNAc...) asparagine glycan is attached at Asn-428. The chain crosses the membrane as a helical span at residues 441–461; that stretch reads WVGGIMPLAALAGGITGGPLI. Topologically, residues 462-473 are cytoplasmic; sequence EYLGRRNTILAT. Residues 474-494 traverse the membrane as a helical segment; the sequence is AVPFIVSSLLIACAVNVAMVL. Residues 495 to 497 are Extracellular-facing; that stretch reads CGR. The helical transmembrane segment at 498–518 threads the bilayer; it reads FLAGFCVGIASLSLPVYLGET. At 519 to 528 the chain is on the cytoplasmic side; the sequence is VQPEVRGTLG. The chain crosses the membrane as a helical span at residues 529–549; sequence LLPTAFGNIGILLCFVAGSFM. A glycan (N-linked (GlcNAc...) asparagine) is linked at Asn-550. Over 550–552 the chain is Extracellular; sequence NWS. Residues 553–573 form a helical membrane-spanning segment; the sequence is MLAFLGAALPVPFLILMFLIP. At 574-636 the chain is on the cytoplasmic side; it reads ETPRWFVGRG…ELLKLNNLKP (63 aa). A helical membrane pass occupies residues 637–657; sequence LSISLGLMFFQQFSGINAVIF. Residues 658–673 are Extracellular-facing; the sequence is YTVQIFKDAGSTIDGN. A helical membrane pass occupies residues 674 to 694; that stretch reads LCTIIVGIVNFLATFIGIVLI. At 695–700 the chain is on the cytoplasmic side; the sequence is DRAGRK. Residues 701–721 form a helical membrane-spanning segment; sequence ILLYVSDIAMVLTLFVLGGFF. Residues 722-740 are Extracellular-facing; sequence YCKANGPDVSHLGWLPLTC. Residues 741–761 traverse the membrane as a helical segment; the sequence is FVIYILGFSLGFGPIPWLMMG. The Cytoplasmic segment spans residues 762–767; that stretch reads EILPAK. A helical transmembrane segment spans residues 768–788; the sequence is IRGSAASVATAFNWFCTFVVT. At 789–801 the chain is on the extracellular side; that stretch reads KTFQDLTVAMGAH. Residues 802–822 form a helical membrane-spanning segment; the sequence is GAFWLFGAICFVGLFFVIIYV. Residues 823-857 lie on the Cytoplasmic side of the membrane; sequence PETQGKTLEDIERKMMGRVRRMSSVANIKPLSFNM. A phosphoserine mark is found at Ser-845 and Ser-846.

It belongs to the major facilitator superfamily. Sugar transporter (TC 2.A.1.1) family. Trehalose transporter subfamily.

The protein resides in the cell membrane. Its function is as follows. Low-capacity facilitative transporter for trehalose. Does not transport maltose, sucrose or lactose. Mediates the bidirectional transfer of trehalose. Responsible for the transport of trehalose synthesized in the fat body and the incorporation of trehalose into other tissues that require a carbon source, thereby regulating trehalose levels in the hemolymph. The sequence is that of Facilitated trehalose transporter Tret1-1 from Drosophila sechellia (Fruit fly).